The primary structure comprises 1597 residues: Rho guanine nucleotide exchange factor 5 (1597 aa).

3 disordered regions span residues 138-246 (PFSS…EGTL), 258-455 (EEQM…SLEP), and 467-1072 (GSFL…VFRE). A Phosphoserine modification is found at serine 184. The segment covering 192 to 204 (ETNQNEGSESGTI) has biased composition (polar residues). A compositionally biased stretch (low complexity) spans 217–237 (ESQGLLHPQEVQVLEEQGQQE). Over residues 266–278 (NDEKGEQKQKQEQ) the composition is skewed to basic and acidic residues. Positions 299–309 (GLNDGEWEQED) are enriched in acidic residues. Basic and acidic residues-rich tracts occupy residues 323 to 368 (GEER…KEKG) and 394 to 404 (RSREEENEHHG). Positions 428-438 (LMTQIPGTQTE) are enriched in polar residues. 2 positions are modified to phosphoserine: serine 445 and serine 450. Over residues 474–490 (SPDKEIDQNSQQEESRL) the composition is skewed to basic and acidic residues. Pro residues predominate over residues 512-522 (PRTPDSAPPSP). Polar residues-rich tracts occupy residues 583–601 (STGT…TVQH) and 655–682 (DYST…NLER). The segment covering 731 to 746 (QRRDTHPSVVETDGHA) has biased composition (basic and acidic residues). 2 stretches are compositionally biased toward pro residues: residues 812-828 (PLPP…PPIS) and 838-856 (PLPP…PLPP). An Asymmetric dimethylarginine modification is found at arginine 866. The span at 901 to 920 (ATARSTESFTSTSRSKSEVS) shows a compositional bias: low complexity. Polar residues predominate over residues 926–941 (SNMTNFLCPSSPTTPW). Basic and acidic residues predominate over residues 950-969 (SKDEAGVSEHPEAPAREPLR). Residues serine 983, serine 1011, and serine 1044 each carry the phosphoserine modification. Positions 990–1012 (QPEKPSHLHLEKASSWPHRRDSG) are enriched in basic and acidic residues. Over residues 1057 to 1072 (AVEKHPGPSDTVVFRE) the composition is skewed to basic and acidic residues. At serine 1126 the chain carries Phosphoserine. In terms of domain architecture, DH spans 1174–1358 (KLQEVKFELI…EQLIRDCNNN (185 aa)). Residues 1390-1502 (WLVKSGELTA…WISALAMPRE (113 aa)) form the PH domain. One can recognise an SH3 domain in the interval 1510–1571 (YNSPQVQCLR…PVQQVEFISN (62 aa)).

In terms of assembly, interacts with SRC. Forms a ternary complex with SRC and the PI3K 85 kDa subunit. Interacts with and is activated by the heterodimer formed by GNB1 and GNG2. Interacts with ODAM (via C-terminus). Interacts with RHOA. Activation of SRC induces tyrosine phosphorylation of ARHGEF5. Ubiquitously expressed with highest levels in placenta. High levels are also found in colon, kidney, trachea, prostate, liver, pancreas, pituitary gland, thyroid gland and mammary gland. In fetal tissues, expressed at high levels in kidney, lung and liver. Expressed at low levels in lung and heart.

Its subcellular location is the cytoplasm. The protein resides in the nucleus. It is found in the cell projection. The protein localises to the podosome. Guanine nucleotide exchange factor which activates Rho GTPases. Strongly activates RHOA. Also strongly activates RHOB, weakly activates RHOC and RHOG and shows no effect on RHOD, RHOV, RHOQ or RAC1. Involved in regulation of cell shape and actin cytoskeletal organization. Plays a role in actin organization by generating a loss of actin stress fibers and the formation of membrane ruffles and filopodia. Required for SRC-induced podosome formation. Involved in positive regulation of immature dendritic cell migration. This Homo sapiens (Human) protein is Rho guanine nucleotide exchange factor 5 (ARHGEF5).